Consider the following 131-residue polypeptide: MATVPTRSGSPRQLTTKQTGDAWEVQARRWLEGKGLRFVAANVNERGGEIDLIMREGRTTVFVEVRYRRSVLYGGAAASVTRSKQHKLLQTARLWLARHNGSFDTVDCRFDVVAFTGNEVEWIKDAFNDHS.

Residues 1-19 (MATVPTRSGSPRQLTTKQT) show a composition bias toward polar residues. Residues 1–20 (MATVPTRSGSPRQLTTKQTG) are disordered.

It belongs to the UPF0102 family.

The chain is UPF0102 protein YraN from Escherichia coli O8 (strain IAI1).